The sequence spans 982 residues: Serine/threonine-protein kinase SULU (982 aa).

The region spanning 30 to 289 (YQDLREIGHG…AEECFRHPFI (260 aa)) is the Protein kinase domain. ATP contacts are provided by residues 36 to 44 (IGHGSFGAV) and K59. D153 serves as the catalytic Proton acceptor. 4 disordered regions span residues 331 to 484 (GKEG…PLDT), 592 to 620 (QNNE…QNQQ), 751 to 789 (LETQ…RDLK), and 957 to 982 (RTGS…QMAM). Positions 353 to 373 (SIGRAGDSASSRSASLTSFRS) are enriched in low complexity. Over residues 421-431 (QMLSSTSTSGV) the composition is skewed to polar residues. Over residues 459 to 472 (IPTSQPTSKSESSS) the composition is skewed to low complexity. The span at 595 to 608 (ELDKRKKDIEDGEK) shows a compositional bias: basic and acidic residues. Over residues 759–768 (SASQNEYTQR) the composition is skewed to polar residues. Residues 957 to 967 (RTGSTSRSSGG) are compositionally biased toward low complexity. Residues 973-982 (GNSSSIQMAM) show a composition bias toward polar residues.

The protein belongs to the protein kinase superfamily. Ser/Thr protein kinase family. STE20 subfamily. Mg(2+) serves as cofactor. In terms of tissue distribution, expressed in the pharynx, including the pharyngeal muscle of the metacorpus, the isthmus, and the terminal bulb; in the intestine, including the pharyngeointestinal valve between the pharynx and the intestine, a structure near the anus likely to be the anal sphincter and the excretory cell and in several ring neurons.

The protein resides in the cytoplasm. It is found in the cytoskeleton. Its subcellular location is the cell cortex. It carries out the reaction L-seryl-[protein] + ATP = O-phospho-L-seryl-[protein] + ADP + H(+). It catalyses the reaction L-threonyl-[protein] + ATP = O-phospho-L-threonyl-[protein] + ADP + H(+). Its function is as follows. Acts as a negative regulator of cortical contractions during early embryonic cell division, possibly by regulating rho-1-dependent actomyosin contractility. Plays a role in polarity establishment in early embryos by regulating the size of the anterior and posterior cortex in the first asymmetric cell division. Might play a role in cell cycle progression. In the germline, involved in the regulation of meiotic progression during oogenesis, possibly by modulating the timing of mpk-1 activation. Plays a role in meiotic recombination events. Involved in pharyngeal pumping. In Caenorhabditis elegans, this protein is Serine/threonine-protein kinase SULU (kin-18).